The primary structure comprises 914 residues: High affinity cAMP-specific and IBMX-insensitive 3',5'-cyclic phosphodiesterase 8 (914 aa).

2 disordered regions span residues 1–27 and 113–138; these read MGCSPSTLPPAPSAGQTGERGSLPLDA and RRATGSTGTSGTSSSGGNSRPGHRKS. Low complexity predominate over residues 116 to 129; the sequence is TGSTGTSGTSSSGG. The 48-residue stretch at 312–359 folds into the PAS domain; that stretch reads TQQALYTALHRLKEVVLITDDLLRIQYANRATERLLNMRLDEIISKQL. A PDEase domain is found at 558-893; it reads TAAIVPAKMK…SQWKKYDEQG (336 aa). His-640 (proton donor) is an active-site residue. Positions 644, 682, 683, and 799 each coordinate a divalent metal cation.

This sequence belongs to the cyclic nucleotide phosphodiesterase family. PDE8 subfamily. A divalent metal cation serves as cofactor. As to expression, expressed in Malpighian tubules and head.

It catalyses the reaction 3',5'-cyclic AMP + H2O = AMP + H(+). It functions in the pathway purine metabolism; 3',5'-cyclic AMP degradation; AMP from 3',5'-cyclic AMP: step 1/1. Its function is as follows. Hydrolyzes the second messenger cAMP, which is a key regulator of many important physiological processes. Involved in the positive regulation of MAP kinase signaling and in inhibiting oxidative stress-induced cell death. This Drosophila melanogaster (Fruit fly) protein is High affinity cAMP-specific and IBMX-insensitive 3',5'-cyclic phosphodiesterase 8.